The following is a 137-amino-acid chain: Nucleoside diphosphate kinase (137 aa).

ATP contacts are provided by Lys9, Phe57, Arg85, Thr91, Arg102, and Asn112. Catalysis depends on His115, which acts as the Pros-phosphohistidine intermediate.

The protein belongs to the NDK family. As to quaternary structure, homotetramer. Mg(2+) is required as a cofactor.

It is found in the cytoplasm. The catalysed reaction is a 2'-deoxyribonucleoside 5'-diphosphate + ATP = a 2'-deoxyribonucleoside 5'-triphosphate + ADP. It carries out the reaction a ribonucleoside 5'-diphosphate + ATP = a ribonucleoside 5'-triphosphate + ADP. In terms of biological role, major role in the synthesis of nucleoside triphosphates other than ATP. The ATP gamma phosphate is transferred to the NDP beta phosphate via a ping-pong mechanism, using a phosphorylated active-site intermediate. This is Nucleoside diphosphate kinase from Campylobacter curvus (strain 525.92).